The primary structure comprises 310 residues: Malate dehydrogenase (310 aa).

Residues 7-12 (GAGNVG) and Asp-32 contribute to the NAD(+) site. Positions 81 and 87 each coordinate substrate. NAD(+)-binding positions include Asn-94 and 117–119 (VSN). Substrate contacts are provided by Asn-119 and Arg-150. Residue His-174 is the Proton acceptor of the active site.

This sequence belongs to the LDH/MDH superfamily. MDH type 3 family.

The catalysed reaction is (S)-malate + NAD(+) = oxaloacetate + NADH + H(+). In terms of biological role, catalyzes the reversible oxidation of malate to oxaloacetate. The sequence is that of Malate dehydrogenase from Chlorobium limicola (strain DSM 245 / NBRC 103803 / 6330).